The primary structure comprises 365 residues: MESFVDEVAIEVFAGHGGAGSVHFRREKYVEFGGPDGGDGGTGGNVIIRPNLSMYTLDKYLSKRKFKAEAGFPGVGDNCSGKKGEDLILFVPLGTQIYDEETGDLLFDFVTDTQEFVVARGGRGGKGNTHFKSSTNQTPRFAQPGEEGEYKFLRLSLKLLADVGIVGLPNAGKSTLISKITDAHPKIAGYAFTTLSPNLGVVKRRGDIFRFTIADIPGIIEGASMGIGLGLSFLRHIERVKGILYLFDASSLDIEEDLKMLRNELFTYNPELLNRPYLIVLNKIDIWDDPEFTKDIISKIIHLGKVIAISADKETNLEKLLEAMDEAFFKDEIEKVLKSTKELKSVSLNESDILGSFENSREIKE.

The 159-residue stretch at 2–160 (ESFVDEVAIE…KFLRLSLKLL (159 aa)) folds into the Obg domain. The OBG-type G domain occupies 161 to 329 (ADVGIVGLPN…LLEAMDEAFF (169 aa)). GTP contacts are provided by residues 167–174 (GLPNAGKS), 192–196 (FTTLS), 215–218 (DIPG), 282–285 (NKID), and 310–312 (SAD). Mg(2+)-binding residues include Ser174 and Thr194.

It belongs to the TRAFAC class OBG-HflX-like GTPase superfamily. OBG GTPase family. In terms of assembly, monomer. The cofactor is Mg(2+).

It localises to the cytoplasm. Functionally, an essential GTPase which binds GTP, GDP and possibly (p)ppGpp with moderate affinity, with high nucleotide exchange rates and a fairly low GTP hydrolysis rate. Plays a role in control of the cell cycle, stress response, ribosome biogenesis and in those bacteria that undergo differentiation, in morphogenesis control. The polypeptide is GTPase Obg (Leptospira borgpetersenii serovar Hardjo-bovis (strain JB197)).